The following is a 525-amino-acid chain: GMP synthase [glutamine-hydrolyzing] (525 aa).

The region spanning 9–207 is the Glutamine amidotransferase type-1 domain; the sequence is RILILDFGSQ…VMDICKCEKL (199 aa). Cys86 (nucleophile) is an active-site residue. Catalysis depends on residues His181 and Glu183. A GMPS ATP-PPase domain is found at 208-400; sequence WTAGAIIEDA…LGLPYDMLYR (193 aa). An ATP-binding site is contributed by 235–241; it reads SGGVDSS.

Homodimer.

The enzyme catalyses XMP + L-glutamine + ATP + H2O = GMP + L-glutamate + AMP + diphosphate + 2 H(+). The protein operates within purine metabolism; GMP biosynthesis; GMP from XMP (L-Gln route): step 1/1. Its function is as follows. Catalyzes the synthesis of GMP from XMP. The sequence is that of GMP synthase [glutamine-hydrolyzing] from Alteromonas mediterranea (strain DSM 17117 / CIP 110805 / LMG 28347 / Deep ecotype).